We begin with the raw amino-acid sequence, 424 residues long: Tyrosine--tRNA ligase (424 aa).

Tyrosine 37 lines the L-tyrosine pocket. The short motif at 42 to 51 is the 'HIGH' region element; it reads PTADSLHLGH. At lysine 144 the chain carries N6-acetyllysine. L-tyrosine contacts are provided by tyrosine 175 and glutamine 179. The 'KMSKS' region signature appears at 235–239; it reads KFGKT. Lysine 238 lines the ATP pocket. The S4 RNA-binding domain maps to 357 to 414; the sequence is ADLMQALVDSELQPSRGQARKTIASNAVTINGEKQSDPEYFFKEEDRLFGRFTLLRRG.

It belongs to the class-I aminoacyl-tRNA synthetase family. TyrS type 1 subfamily. As to quaternary structure, homodimer.

It is found in the cytoplasm. The catalysed reaction is tRNA(Tyr) + L-tyrosine + ATP = L-tyrosyl-tRNA(Tyr) + AMP + diphosphate + H(+). Functionally, catalyzes the attachment of tyrosine to tRNA(Tyr) in a two-step reaction: tyrosine is first activated by ATP to form Tyr-AMP and then transferred to the acceptor end of tRNA(Tyr). The chain is Tyrosine--tRNA ligase from Escherichia fergusonii (strain ATCC 35469 / DSM 13698 / CCUG 18766 / IAM 14443 / JCM 21226 / LMG 7866 / NBRC 102419 / NCTC 12128 / CDC 0568-73).